An 87-amino-acid polypeptide reads, in one-letter code: Anaphase-promoting complex subunit 11 (87 aa).

The RING-type; atypical zinc finger occupies 35 to 77; the sequence is CVDCKIPGDDCPPVWGVCNHAFHMHCILKWLNANELQQCPMCR.

It belongs to the RING-box family. In terms of assembly, the APC/C is composed of at least 13 subunits that stay tightly associated throughout the cell cycle: anapc1, anapc2, anapc3, anapc4, anapc5, anapc6, anapc7, anapc8, anapc10, anapc11, cdc20, cdc26 and cdh1.

It is found in the nucleus. It functions in the pathway protein modification; protein ubiquitination. Functionally, component of the anaphase promoting complex/cyclosome (APC/C), a cell cycle-regulated E3 ubiquitin-protein ligase complex that controls progression through mitosis and the G1 phase of the cell cycle. This chain is Anaphase-promoting complex subunit 11 (anapc11), found in Dictyostelium discoideum (Social amoeba).